The chain runs to 475 residues: Trigger factor (475 aa).

One can recognise a PPIase FKBP-type domain in the interval 165–250 (GDRVTIDYLG…VKAVFRPDEL (86 aa)). Positions 439–466 (EYDETDVPEEKPAKKKSAVKEKSAEKTS) are enriched in basic and acidic residues. Residues 439 to 475 (EYDETDVPEEKPAKKKSAVKEKSAEKTSAKKKAPKKA) form a disordered region.

This sequence belongs to the FKBP-type PPIase family. Tig subfamily.

It localises to the cytoplasm. It catalyses the reaction [protein]-peptidylproline (omega=180) = [protein]-peptidylproline (omega=0). Functionally, involved in protein export. Acts as a chaperone by maintaining the newly synthesized protein in an open conformation. Functions as a peptidyl-prolyl cis-trans isomerase. The chain is Trigger factor from Bartonella tribocorum (strain CIP 105476 / IBS 506).